The sequence spans 140 residues: T cell receptor alpha chain constant (140 aa).

One can recognise an Ig-like C1-type domain in the interval 19–107; sequence KSVCLFTDFD…LVEKSFETDT (89 aa). Cys22 and Cys72 form a disulfide bridge. N-linked (GlcNAc...) asparagine glycosylation is found at Asn32, Asn66, Asn77, and Asn113. The connecting peptide stretch occupies residues 94–115; that stretch reads CDVKLVEKSFETDTNLNFQNLS. Residues 116 to 138 form a helical membrane-spanning segment; sequence VIGFRILLLKVAGFNLLMTLRLW. Over 139 to 140 the chain is Cytoplasmic; it reads SS.

As to quaternary structure, alpha-beta TR is a heterodimer composed of an alpha and beta chain; disulfide-linked. The alpha-beta TR is associated with the transmembrane signaling CD3 coreceptor proteins to form the TR-CD3 (TcR or TCR). The assembly of alpha-beta TR heterodimers with CD3 occurs in the endoplasmic reticulum where a single alpha-beta TR heterodimer associates with one CD3D-CD3E heterodimer, one CD3G-CD3E heterodimer and one CD247 homodimer forming a stable octameric structure. CD3D-CD3E and CD3G-CD3E heterodimers preferentially associate with TR alpha and TR beta chains, respectively. The association of the CD247 homodimer is the last step of TcR assembly in the endoplasmic reticulum and is required for transport to the cell surface.

The protein resides in the cell membrane. Its function is as follows. Constant region of T cell receptor (TR) alpha chain. Alpha-beta T cell receptors are antigen specific receptors which are essential to the immune response and are present on the cell surface of T lymphocytes. Recognize peptide-major histocompatibility (MH) (pMH) complexes that are displayed by antigen presenting cells (APC), a prerequisite for efficient T cell adaptive immunity against pathogens. Binding of alpha-beta TR to pMH complex initiates TR-CD3 clustering on the cell surface and intracellular activation of LCK that phosphorylates the ITAM motifs of CD3G, CD3D, CD3E and CD247 enabling the recruitment of ZAP70. In turn, ZAP70 phosphorylates LAT, which recruits numerous signaling molecules to form the LAT signalosome. The LAT signalosome propagates signal branching to three major signaling pathways, the calcium, the mitogen-activated protein kinase (MAPK) kinase and the nuclear factor NF-kappa-B (NF-kB) pathways, leading to the mobilization of transcription factors that are critical for gene expression and essential for T cell growth and differentiation. The T cell repertoire is generated in the thymus, by V-(D)-J rearrangement. This repertoire is then shaped by intrathymic selection events to generate a peripheral T cell pool of self-MH restricted, non-autoaggressive T cells. Post-thymic interaction of alpha-beta TR with the pMH complexes shapes TR structural and functional avidity. This is T cell receptor alpha chain constant from Homo sapiens (Human).